We begin with the raw amino-acid sequence, 343 residues long: Cytoplasmic tRNA 2-thiolation protein 1 (343 aa).

It belongs to the TtcA family. CTU1/NCS6/ATPBD3 subfamily.

Its subcellular location is the cytoplasm. The protein operates within tRNA modification; 5-methoxycarbonylmethyl-2-thiouridine-tRNA biosynthesis. Functionally, plays a central role in 2-thiolation of mcm(5)S(2)U at tRNA wobble positions of tRNA(Lys), tRNA(Glu) and tRNA(Gln). Directly binds tRNAs and probably acts by catalyzing adenylation of tRNAs, an intermediate required for 2-thiolation. It is unclear whether it acts as a sulfurtransferase that transfers sulfur from thiocarboxylated URM1 onto the uridine of tRNAs at wobble position. This Drosophila mojavensis (Fruit fly) protein is Cytoplasmic tRNA 2-thiolation protein 1.